The primary structure comprises 396 residues: Probable intron-encoded endonuclease aI3 (396 aa).

Residues 51 to 90 are disordered; that stretch reads TNNTNNNNPADSSSYESRMRAAGNSNSNSNSNSDSNINNT. Residues 74–90 show a composition bias toward low complexity; that stretch reads NSNSNSNSNSDSNINNT.

The protein belongs to the LAGLIDADG endonuclease family.

It is found in the mitochondrion. Its function is as follows. Mitochondrial DNA endonuclease involved in intron homing. The chain is Probable intron-encoded endonuclease aI3 (aI3) from Kluyveromyces lactis (strain ATCC 8585 / CBS 2359 / DSM 70799 / NBRC 1267 / NRRL Y-1140 / WM37) (Yeast).